The sequence spans 1663 residues: MATDGASCEPDLSRAPEDAAGAAAEAAKKEFDVDTLSKSELRMLLSVMEGELEARDLVIEALRARRKEVFIQERYGRFNLNDPFLALQRDYEAGAGDKEKKPVCTNPLSILEAVMAHCKKMQERMSAQLAAAESRQKKLEMEKLQLQALEQEHKKLAARLEEERGKNKQVVLMLVKECKQLSGKVIEEAQKLEDIMAKLEEEKKKTNELEEELSAEKRRSTEMEAQMEKQLSEFDTEREQLRAKLNREEAHTTDLKEEIDKMKKMIEQLKRGSDSKPSLSLPRKTKDRRLVSISVGTEGTVTRSVACQTDLVTESADHVKKLPLTMPVKPSTGSPLVSANAKGSVCTSATMARPGIDRQASHGDLIGSSVPAFPPPSANRIEENGPSTDSTPDPTSSTPPLPSNAAPPTTQTPGIAPQNSQAPPMHSLHSPCANASLHPGLNPRIQAARFRFQGNANDPDQNGNTTQSPPSRDMSPTSRDNLVAKQLARNTVTQALSRFTSPQAGAPSRPGAPPTGDVGTHPPVGRTSLKTHGVARVDRGNPPPIPPKKPGLSQTPSPPHPQLKVIIDSSRASNTGAKVDNKTVASPPSSLPQGNRVTNEDNLPKSSSPQLPPKPSIDLTVAPAGCTVSALATSQVGAWPAATPGLNQPACSDSSLVIPTTIAFCSSINPVSASSCRPGASDSLLVTASGWSPSLTPLLMSGGPAPLAGRPTLLQQAAAQGNVTLLSMLLNEEGLDINYSCEDGHSALYSAAKNGHTDCVRLLLSAEAQINAADKNGFTPLCAAAAQGHFECVELLIAYDANINHAADGGQTPLYLACKNENKECIKLLLEAGTNRSVKTTDGWTPVHAAVDTGNVDSLKLLMYHRIPACGNSFNEEESESGVFDLDGGEESPEGIFKPVVPADLINHANREGWTAAHIAASKGFKNCLEILCRHGGLEPERRDKCNRTVHDVATDDCKHLLENLNALKIPLRISVGEIEPSNYGSDDLECENTICALNIRKQTSWDDFSKAVSQALTNHFQAISSDGWWSLEDVTCNNTTNSNIGLSATSIRSITLGNVPWSVGQSFTQSPWDFMRKNKAEHITVLLSGPQEGCLSSVTYASMIPLQMMQNYLRLVEQYHNVIFHGPEGSLQDYIVHQLALCLKHRQMAAGFSCEIVRAEVDAGFSKEQLLDLFISSACLIPVKQSPSKKKIIIILENLEKSSLSELLRDFLAPLENRSTESPCTFQKGNGMSECYYFHENCFLMGTIAKACLQGSDLLVQQHFRWVQLRWDGEPMQGLLQRFLRRKVVNKFKGQAPSPCDPVCKIVDWALSVWRQLNSCLARLGTPEALLGPKYFLSCPVVPGHAQVTVKWMSKLWNGVIAPRVQEAILSRASVKRQPGFGQTTAKRHPSQGQQAVVKAALSILLNKAVLHGCPLPRAELDQHTADFKGGSFPLSIVSSYNSCNKKKGESGAWRKVNTSPRRKSGRFSLPTWNKPDLSTEGIKNKTISQLNYNRNASLSKQKSLENDLSLTLNLDQRLSLGSDDEADLVKELQSMCSSKSESDISKIADSRDDLRMFDSSGNNPVLSATINNLRMPVSQKEVSPLSSHQTTECSNSKSKTELGVSRVKSFLPVPRSKVTLCSQNTKRSSSSSNTRQIEINNNSKEENWNLHKNEHLDKHNK.

Disordered regions lie at residues 1–23 (MATD…AGAA), 203–222 (KKKT…RSTE), 358–440 (RQAS…LHPG), 454–479 (GNAN…PTSR), and 498–616 (RFTS…PKPS). A coiled-coil region spans residues 119-276 (KKMQERMSAQ…EQLKRGSDSK (158 aa)). The segment covering 386–396 (PSTDSTPDPTS) has biased composition (low complexity). Polar residues predominate over residues 411-422 (QTPGIAPQNSQA). The residue at position 498 (Arg-498) is an Asymmetric dimethylarginine. The segment covering 583 to 597 (TVASPPSSLPQGNRV) has biased composition (polar residues). ANK repeat units lie at residues 709–739 (GRPT…DINY), 743–772 (DGHS…QINA), 776–805 (NGFT…NINH), 809–838 (GGQT…NRSV), 842–871 (DGWT…PACG), and 912–942 (EGWT…EPER). The segment at 1447–1477 (KKKGESGAWRKVNTSPRRKSGRFSLPTWNKP) is disordered. Phosphoserine is present on Ser-1524. 2 disordered regions span residues 1581–1602 (QKEV…KSKT) and 1618–1663 (SKVT…KHNK). Residues 1582–1599 (KEVSPLSSHQTTECSNSK) show a composition bias toward polar residues. The segment covering 1624 to 1638 (SQNTKRSSSSSNTRQ) has biased composition (low complexity). Positions 1645–1663 (SKEENWNLHKNEHLDKHNK) are enriched in basic and acidic residues.

Interacts with CTTN/cortactin SH3 domain. Interacts with STRN, STRN4/zinedin and MOB4/phocein; this interactions mediate the association with the STRIPAK core complex and may regulate dendritic spine distribution of the STRIPAK complex in hippocampal neurons. Activation of glutamate receptors weakens the interaction with STRN and STRN4.

It localises to the cytoplasm. Its subcellular location is the cell cortex. It is found in the cell projection. The protein localises to the dendritic spine. Functionally, regulates the dendritic spine distribution of CTTN/cortactin in hippocampal neurons, and thus controls dendritic spinogenesis and dendritic spine maintenance. Associates with the striatin-interacting phosphatase and kinase (STRIPAK) core complex to regulate dendritic spine distribution of the STRIPAK complex in hippocampal neurons. The polypeptide is Cortactin-binding protein 2 (CTTNBP2) (Papio anubis (Olive baboon)).